A 226-amino-acid polypeptide reads, in one-letter code: ATP-dependent dethiobiotin synthetase BioD (226 aa).

12–17 serves as a coordination point for ATP; that stretch reads GVGKTV. Position 16 (Thr16) interacts with Mg(2+). Residue Lys37 is part of the active site. Thr41 provides a ligand contact to substrate. Residues Asp49, 108–111, 169–170, and 197–199 contribute to the ATP site; these read EGAG, GS, and PAG. 2 residues coordinate Mg(2+): Asp49 and Glu108.

The protein belongs to the dethiobiotin synthetase family. In terms of assembly, homodimer. Requires Mg(2+) as cofactor.

Its subcellular location is the cytoplasm. It catalyses the reaction (7R,8S)-7,8-diammoniononanoate + CO2 + ATP = (4R,5S)-dethiobiotin + ADP + phosphate + 3 H(+). It participates in cofactor biosynthesis; biotin biosynthesis; biotin from 7,8-diaminononanoate: step 1/2. Functionally, catalyzes a mechanistically unusual reaction, the ATP-dependent insertion of CO2 between the N7 and N8 nitrogen atoms of 7,8-diaminopelargonic acid (DAPA, also called 7,8-diammoniononanoate) to form a ureido ring. The sequence is that of ATP-dependent dethiobiotin synthetase BioD from Mycobacterium bovis (strain ATCC BAA-935 / AF2122/97).